Reading from the N-terminus, the 340-residue chain is Glycerol-3-phosphate dehydrogenase [NAD(P)+] (340 aa).

NADPH is bound by residues S23, W24, R43, K44, and K113. Sn-glycerol 3-phosphate-binding residues include K113, G141, and T143. A145 provides a ligand contact to NADPH. Positions 196, 249, 259, 260, and 261 each coordinate sn-glycerol 3-phosphate. The active-site Proton acceptor is K196. R260 is a binding site for NADPH. E286 serves as a coordination point for NADPH.

The protein belongs to the NAD-dependent glycerol-3-phosphate dehydrogenase family.

It is found in the cytoplasm. It catalyses the reaction sn-glycerol 3-phosphate + NAD(+) = dihydroxyacetone phosphate + NADH + H(+). The catalysed reaction is sn-glycerol 3-phosphate + NADP(+) = dihydroxyacetone phosphate + NADPH + H(+). The protein operates within membrane lipid metabolism; glycerophospholipid metabolism. In terms of biological role, catalyzes the reduction of the glycolytic intermediate dihydroxyacetone phosphate (DHAP) to sn-glycerol 3-phosphate (G3P), the key precursor for phospholipid synthesis. The sequence is that of Glycerol-3-phosphate dehydrogenase [NAD(P)+] from Zymomonas mobilis subsp. mobilis (strain ATCC 31821 / ZM4 / CP4).